Here is a 361-residue protein sequence, read N- to C-terminus: UDP-N-acetylglucosamine--N-acetylmuramyl-(pentapeptide) pyrophosphoryl-undecaprenol N-acetylglucosamine transferase (361 aa).

UDP-N-acetyl-alpha-D-glucosamine-binding positions include 12–14 (TGG), asparagine 123, arginine 166, serine 192, and glutamine 293.

This sequence belongs to the glycosyltransferase 28 family. MurG subfamily.

The protein resides in the cell inner membrane. It catalyses the reaction di-trans,octa-cis-undecaprenyl diphospho-N-acetyl-alpha-D-muramoyl-L-alanyl-D-glutamyl-meso-2,6-diaminopimeloyl-D-alanyl-D-alanine + UDP-N-acetyl-alpha-D-glucosamine = di-trans,octa-cis-undecaprenyl diphospho-[N-acetyl-alpha-D-glucosaminyl-(1-&gt;4)]-N-acetyl-alpha-D-muramoyl-L-alanyl-D-glutamyl-meso-2,6-diaminopimeloyl-D-alanyl-D-alanine + UDP + H(+). The protein operates within cell wall biogenesis; peptidoglycan biosynthesis. In terms of biological role, cell wall formation. Catalyzes the transfer of a GlcNAc subunit on undecaprenyl-pyrophosphoryl-MurNAc-pentapeptide (lipid intermediate I) to form undecaprenyl-pyrophosphoryl-MurNAc-(pentapeptide)GlcNAc (lipid intermediate II). The sequence is that of UDP-N-acetylglucosamine--N-acetylmuramyl-(pentapeptide) pyrophosphoryl-undecaprenol N-acetylglucosamine transferase from Caulobacter vibrioides (strain ATCC 19089 / CIP 103742 / CB 15) (Caulobacter crescentus).